Here is an 842-residue protein sequence, read N- to C-terminus: Leucine--tRNA ligase (842 aa).

The 'HIGH' region motif lies at 44–55; it reads PYPSANGLHVGH. Positions 619-623 match the 'KMSKS' region motif; that stretch reads KMSKS. ATP is bound at residue Lys622.

Belongs to the class-I aminoacyl-tRNA synthetase family.

It is found in the cytoplasm. The enzyme catalyses tRNA(Leu) + L-leucine + ATP = L-leucyl-tRNA(Leu) + AMP + diphosphate. The sequence is that of Leucine--tRNA ligase from Borrelia hermsii (strain HS1 / DAH).